Here is a 248-residue protein sequence, read N- to C-terminus: Proteasome subunit alpha (248 aa).

It belongs to the peptidase T1A family. The 20S proteasome core is composed of 14 alpha and 14 beta subunits that assemble into four stacked heptameric rings, resulting in a barrel-shaped structure. The two inner rings, each composed of seven catalytic beta subunits, are sandwiched by two outer rings, each composed of seven alpha subunits. The catalytic chamber with the active sites is on the inside of the barrel. Has a gated structure, the ends of the cylinder being occluded by the N-termini of the alpha-subunits. Is capped at one or both ends by the proteasome regulatory ATPase, PAN.

It localises to the cytoplasm. With respect to regulation, the formation of the proteasomal ATPase PAN-20S proteasome complex, via the docking of the C-termini of PAN into the intersubunit pockets in the alpha-rings, triggers opening of the gate for substrate entry. Interconversion between the open-gate and close-gate conformations leads to a dynamic regulation of the 20S proteasome proteolysis activity. Component of the proteasome core, a large protease complex with broad specificity involved in protein degradation. The sequence is that of Proteasome subunit alpha from Methanothermobacter thermautotrophicus (strain ATCC 29096 / DSM 1053 / JCM 10044 / NBRC 100330 / Delta H) (Methanobacterium thermoautotrophicum).